The sequence spans 289 residues: MFDNSTQVVGLMGYPLGHSMSPAMHNRAYKDLGINYVYLPLEIKPDFLKEGIEGLRAFNFRGVNVTIPYKEKVIPYLDEIDRLAGEIGAVNTIVNNGGKLKGYNTDALGFKKMLEDDCSFEIKGTKAVIIGAGGASRAVGAVLAREGASEIFLLNRTLKKAAKLVGIWNKTYPGIKTVALPLDEDKYLPVVKRCDVIIDTTPVGMAPGIKGGPVIAKEAITRDTLVVDLVYNPPETTLIKAGRQVGARTMNGFPMLIYQAAYAFKLWTGIKPELFIKPVREAISPDFFA.

Shikimate is bound by residues 19 to 21 and threonine 66; that span reads SMS. Residue lysine 70 is the Proton acceptor of the active site. Asparagine 91 and aspartate 106 together coordinate shikimate. NADP(+)-binding positions include 131–135, 155–160, and leucine 229; these read GAGGA and NRTLKK. Tyrosine 231 contributes to the shikimate binding site. Glycine 252 contacts NADP(+).

Belongs to the shikimate dehydrogenase family. In terms of assembly, homodimer.

It catalyses the reaction shikimate + NADP(+) = 3-dehydroshikimate + NADPH + H(+). Its pathway is metabolic intermediate biosynthesis; chorismate biosynthesis; chorismate from D-erythrose 4-phosphate and phosphoenolpyruvate: step 4/7. Its function is as follows. Involved in the biosynthesis of the chorismate, which leads to the biosynthesis of aromatic amino acids. Catalyzes the reversible NADPH linked reduction of 3-dehydroshikimate (DHSA) to yield shikimate (SA). The chain is Shikimate dehydrogenase (NADP(+)) from Halothermothrix orenii (strain H 168 / OCM 544 / DSM 9562).